We begin with the raw amino-acid sequence, 281 residues long: MKRFYKTAFFSEIGSEEVSHFWADTMSSHSPLEQFSILPLIPMNIGNLYFSFTNSSLFMLLTLSLVLLLVNFVTKKGGGNLVPNAWQSLVELIYDFVLNLVNEQIGGLSGNVKQKFFPCILVTFTFLLFCNLQGMIPYSFTVTSHFLITLGLSFSIFIGITIVGFQRNGLHFLSFLLPAGVPLPLAPFLVLLELISYCFRALSLGIRLFANMMAGHSLVKILSGFAWTMLCMNDLFYFIGDLGPLFIVLALTGLELGVAILQAYVFTILICIYLNDAINLH.

6 helical membrane-spanning segments follow: residues 50–70 (FSFT…LLLV), 116–136 (FFPC…QGMI), 145–165 (HFLI…IVGF), 172–192 (FLSF…LVLL), 219–239 (VKIL…FYFI), and 246–266 (FIVL…AYVF).

Belongs to the ATPase A chain family. In terms of assembly, F-type ATPases have 2 components, CF(1) - the catalytic core - and CF(0) - the membrane proton channel. CF(1) has five subunits: alpha(3), beta(3), gamma(1), delta(1), epsilon(1). CF(0) has three main subunits: a, b and c.

It localises to the mitochondrion inner membrane. In terms of biological role, mitochondrial membrane ATP synthase (F(1)F(0) ATP synthase or Complex V) produces ATP from ADP in the presence of a proton gradient across the membrane which is generated by electron transport complexes of the respiratory chain. F-type ATPases consist of two structural domains, F(1) - containing the extramembraneous catalytic core and F(0) - containing the membrane proton channel, linked together by a central stalk and a peripheral stalk. During catalysis, ATP synthesis in the catalytic domain of F(1) is coupled via a rotary mechanism of the central stalk subunits to proton translocation. Key component of the proton channel; it may play a direct role in the translocation of protons across the membrane. This is ATP synthase subunit a (ATP6) from Oenothera berteroana (Bertero's evening primrose).